Consider the following 83-residue polypeptide: Kappa-actitoxin-Aer3a (83 aa).

An N-terminal signal peptide occupies residues 1-22; it reads MKGQMIICLVLIALCMSVVVMA. Residues 23 to 49 constitute a propeptide that is removed on maturation; the sequence is QNLRAEELEKANPKDERVRSFERNQKR. Positions 51–83 constitute a ShKT domain; the sequence is CKDYLPKSECTQFRCRTSMKYKYTNCKKTCGTC. Cystine bridges form between Cys51-Cys83, Cys60-Cys76, and Cys65-Cys80.

The protein belongs to the sea anemone type 1 potassium channel toxin family. Type 1a subfamily.

The protein localises to the secreted. It localises to the nematocyst. Specifically, dose-dependently and potently blocks the voltage-gated potassium channel Kv1.1/KCNA1 (Ki=1.6 pM). Moderately blocks potassium channel heterotetramers formed by 3 subunits of Kv1.1/KCNA1 and 1 subunit of Kv1.2/KCNA2 (Ki=56 nM) and weakly blocks those formed by 2 subunits of Kv1.1/KCNA1 and 2 subunits of Kv1.2/KCNA2 (Ki=14 nM). The sequence is that of Kappa-actitoxin-Aer3a from Anemonia erythraea (Sea anemone).